Consider the following 124-residue polypeptide: Small ribosomal subunit protein uS12 (124 aa).

Residues 1–28 (MPTISQLVGSERKRLTKKTKSPALKSCP) are disordered. D89 is subject to 3-methylthioaspartic acid. Residues 104–124 (TAGVKDRRQSRSKYGAKAPKD) form a disordered region.

The protein belongs to the universal ribosomal protein uS12 family. In terms of assembly, part of the 30S ribosomal subunit. Contacts proteins S8 and S17. May interact with IF1 in the 30S initiation complex.

Functionally, with S4 and S5 plays an important role in translational accuracy. Its function is as follows. Interacts with and stabilizes bases of the 16S rRNA that are involved in tRNA selection in the A site and with the mRNA backbone. Located at the interface of the 30S and 50S subunits, it traverses the body of the 30S subunit contacting proteins on the other side and probably holding the rRNA structure together. The combined cluster of proteins S8, S12 and S17 appears to hold together the shoulder and platform of the 30S subunit. The polypeptide is Small ribosomal subunit protein uS12 (Prochlorococcus marinus (strain MIT 9301)).